The following is a 40-amino-acid chain: Photosystem II reaction center protein J (40 aa).

The helical transmembrane segment at 8–28 threads the bilayer; it reads IPLWLIGTVAGILVLGLLGIF.

This sequence belongs to the PsbJ family. PSII is composed of 1 copy each of membrane proteins PsbA, PsbB, PsbC, PsbD, PsbE, PsbF, PsbH, PsbI, PsbJ, PsbK, PsbL, PsbM, PsbT, PsbX, PsbY, PsbZ, Psb30/Ycf12, at least 3 peripheral proteins of the oxygen-evolving complex and a large number of cofactors. It forms dimeric complexes.

The protein resides in the plastid. Its subcellular location is the chloroplast thylakoid membrane. Functionally, one of the components of the core complex of photosystem II (PSII). PSII is a light-driven water:plastoquinone oxidoreductase that uses light energy to abstract electrons from H(2)O, generating O(2) and a proton gradient subsequently used for ATP formation. It consists of a core antenna complex that captures photons, and an electron transfer chain that converts photonic excitation into a charge separation. The polypeptide is Photosystem II reaction center protein J (Physcomitrium patens (Spreading-leaved earth moss)).